A 118-amino-acid chain; its full sequence is Non-specific lipid-transfer protein 5 (118 aa).

The first 25 residues, 1-25 (MEGLLKLSTLVIVCMLVTAPMASEA), serve as a signal peptide directing secretion. Disulfide bonds link Cys-29–Cys-76, Cys-39–Cys-53, Cys-54–Cys-100, and Cys-74–Cys-114.

It belongs to the plant LTP family.

Plant non-specific lipid-transfer proteins transfer phospholipids as well as galactolipids across membranes. May play a role in wax or cutin deposition in the cell walls of expanding epidermal cells and certain secretory tissues. This chain is Non-specific lipid-transfer protein 5 (LTP5), found in Arabidopsis thaliana (Mouse-ear cress).